We begin with the raw amino-acid sequence, 108 residues long: uncharacterized protein (108 aa).

Residues 20-74 form the HTH cro/C1-type domain; that stretch reads VRQRRTALILDQETLARRIGVSFQQIQKYERGRNRISASRLYDIAKALAVPIDYF. Residues 31–50 constitute a DNA-binding region (H-T-H motif); sequence QETLARRIGVSFQQIQKYER.

This is an uncharacterized protein from Rhodospirillum rubrum.